A 487-amino-acid chain; its full sequence is N-succinylglutamate 5-semialdehyde dehydrogenase (487 aa).

221–226 (GSSDTG) provides a ligand contact to NAD(+). Residues Glu244 and Cys278 contribute to the active site.

It belongs to the aldehyde dehydrogenase family. AstD subfamily.

The enzyme catalyses N-succinyl-L-glutamate 5-semialdehyde + NAD(+) + H2O = N-succinyl-L-glutamate + NADH + 2 H(+). The protein operates within amino-acid degradation; L-arginine degradation via AST pathway; L-glutamate and succinate from L-arginine: step 4/5. Functionally, catalyzes the NAD-dependent reduction of succinylglutamate semialdehyde into succinylglutamate. The chain is N-succinylglutamate 5-semialdehyde dehydrogenase from Burkholderia orbicola (strain MC0-3).